Consider the following 351-residue polypeptide: Tropomodulin-2 (351 aa).

Serine 25 carries the phosphoserine modification.

It belongs to the tropomodulin family. In terms of assembly, binds to the N-terminus of tropomyosin and to actin. Binds to TMBr3 as well as to other low molecular mass tropomyosins (TM5a or TM5), but not to high molecular mass tropomyosins (TM2 or TMBr1). In terms of tissue distribution, neuronal-tissue specific.

It is found in the cytoplasm. It localises to the cytoskeleton. Functionally, blocks the elongation and depolymerization of the actin filaments at the pointed end. The Tmod/TM complex contributes to the formation of the short actin protofilament, which in turn defines the geometry of the membrane skeleton. The sequence is that of Tropomodulin-2 (Tmod2) from Rattus norvegicus (Rat).